The following is an 896-amino-acid chain: Bifunctional glutamine synthetase adenylyltransferase/adenylyl-removing enzyme (896 aa).

Residues 1 to 411 form an adenylyl removase region; the sequence is MSDNRLDTAR…LFNEILSEPE (411 aa). The segment at 417–896 is adenylyl transferase; that stretch reads NSEWQWAWQE…EVFGEEAATA (480 aa).

It belongs to the GlnE family. Mg(2+) serves as cofactor.

It carries out the reaction [glutamine synthetase]-O(4)-(5'-adenylyl)-L-tyrosine + phosphate = [glutamine synthetase]-L-tyrosine + ADP. It catalyses the reaction [glutamine synthetase]-L-tyrosine + ATP = [glutamine synthetase]-O(4)-(5'-adenylyl)-L-tyrosine + diphosphate. Functionally, involved in the regulation of glutamine synthetase GlnA, a key enzyme in the process to assimilate ammonia. When cellular nitrogen levels are high, the C-terminal adenylyl transferase (AT) inactivates GlnA by covalent transfer of an adenylyl group from ATP to specific tyrosine residue of GlnA, thus reducing its activity. Conversely, when nitrogen levels are low, the N-terminal adenylyl removase (AR) activates GlnA by removing the adenylyl group by phosphorolysis, increasing its activity. The regulatory region of GlnE binds the signal transduction protein PII (GlnB) which indicates the nitrogen status of the cell. The chain is Bifunctional glutamine synthetase adenylyltransferase/adenylyl-removing enzyme from Neisseria meningitidis serogroup A / serotype 4A (strain DSM 15465 / Z2491).